A 167-amino-acid polypeptide reads, in one-letter code: Transcription factor E (167 aa).

Residues 8-90 form the HTH TFE/IIEalpha-type domain; it reads NDKVIRGYLI…LWHLDFSDVE (83 aa).

It belongs to the TFE family. As to quaternary structure, monomer. Interaction with RNA polymerase subunits RpoF and RpoE is necessary for Tfe stimulatory transcription activity. Able to interact with Tbp and RNA polymerase in the absence of DNA promoter. Interacts both with the preinitiation and elongation complexes.

In terms of biological role, transcription factor that plays a role in the activation of archaeal genes transcribed by RNA polymerase. Facilitates transcription initiation by enhancing TATA-box recognition by TATA-box-binding protein (Tbp), and transcription factor B (Tfb) and RNA polymerase recruitment. Not absolutely required for transcription in vitro, but particularly important in cases where Tbp or Tfb function is not optimal. It dynamically alters the nucleic acid-binding properties of RNA polymerases by stabilizing the initiation complex and destabilizing elongation complexes. Seems to translocate with the RNA polymerase following initiation and acts by binding to the non template strand of the transcription bubble in elongation complexes. In Methanosarcina acetivorans (strain ATCC 35395 / DSM 2834 / JCM 12185 / C2A), this protein is Transcription factor E.